Here is a 375-residue protein sequence, read N- to C-terminus: Patatin-1-Kuras 2 (375 aa).

An N-terminal signal peptide occupies residues 1–11; that stretch reads MILATTSSTFA. One can recognise a PNPLA domain in the interval 20-218; the sequence is LSIDGGGIKG…TVADPALLSV (199 aa). The GXGXXG signature appears at 24 to 29; that stretch reads GGGIKG. The short motif at 63–67 is the GXSXG element; that stretch reads GTSTG. Serine 65 serves as the catalytic Nucleophile. N-linked (GlcNAc...) asparagine glycosylation occurs at asparagine 103. The active-site Proton acceptor is the aspartate 204. The short motif at 204-206 is the DGA/G element; it reads DGA. The stretch at 349-373 forms a coiled coil; it reads ETYEEALKRFAKLLSDRKKLRANKA.

The protein belongs to the patatin family. As to expression, tuber.

It localises to the vacuole. Functionally, probable lipolytic acyl hydrolase (LAH), an activity which is thought to be involved in the response of tubers to pathogens. The sequence is that of Patatin-1-Kuras 2 (pat1-k2) from Solanum tuberosum (Potato).